The sequence spans 348 residues: RNA 3'-terminal phosphate cyclase (348 aa).

ATP-binding positions include Q101 and 286 to 289 (HMAD). H312 acts as the Tele-AMP-histidine intermediate in catalysis.

Belongs to the RNA 3'-terminal cyclase family. Type 1 subfamily.

It is found in the cytoplasm. It catalyses the reaction a 3'-end 3'-phospho-ribonucleotide-RNA + ATP = a 3'-end 2',3'-cyclophospho-ribonucleotide-RNA + AMP + diphosphate. Catalyzes the conversion of 3'-phosphate to a 2',3'-cyclic phosphodiester at the end of RNA. The mechanism of action of the enzyme occurs in 3 steps: (A) adenylation of the enzyme by ATP; (B) transfer of adenylate to an RNA-N3'P to produce RNA-N3'PP5'A; (C) and attack of the adjacent 2'-hydroxyl on the 3'-phosphorus in the diester linkage to produce the cyclic end product. The biological role of this enzyme is unknown but it is likely to function in some aspects of cellular RNA processing. In Pyrobaculum aerophilum (strain ATCC 51768 / DSM 7523 / JCM 9630 / CIP 104966 / NBRC 100827 / IM2), this protein is RNA 3'-terminal phosphate cyclase.